The following is a 555-amino-acid chain: Inositol 1,4,5-triphosphate receptor associated 2 (555 aa).

Topologically, residues M1–K495 are cytoplasmic. Disordered regions lie at residues S84 to P103 and R128 to A147. Phosphothreonine is present on T91. A compositionally biased stretch (low complexity) spans T91–D102. The span at S129 to A142 shows a compositional bias: polar residues. Residues T227–Q341 adopt a coiled-coil conformation. S363, S370, and S424 each carry phosphoserine. Residues E437–K469 form a disordered region. Positions T451–N465 are enriched in basic and acidic residues. Residues A496–G516 traverse the membrane as a helical; Anchor for type IV membrane protein segment. Over Q517–V555 the chain is Lumenal.

It belongs to the IRAG2 family. Interacts (via coiled-coil domain) with ITPR3. Interacts with SUN1 and SUN2. Interacts with microtubules. Interacts with HCN4; regulates HCN4 channel activity. Post-translationally, the removal of the C-terminal lumenal domain occurs by proteolytic processing. As to expression, expressed at high levels in pre B-cells, mature B-cells and pre T-cells. Expressed at low levels in mature T-cells and plasma B-cells. Expressed in germinal center B-cells, splenic marginal zone cells and B-cell lymphomas. Expressed in neuronal cells in the cerebral cortex, epithelial cells in tonsil, adrenal glands, zymogen-producing cells in the stomach and epithelial cells in seminal vesicles.

It localises to the cytoplasm. The protein resides in the endoplasmic reticulum membrane. The protein localises to the nucleus envelope. It is found in the cytoskeleton. Its subcellular location is the microtubule organizing center. It localises to the centrosome. The protein resides in the spindle pole. The protein localises to the chromosome. In terms of biological role, plays a role in the delivery of peptides to major histocompatibility complex (MHC) class I molecules; this occurs in a transporter associated with antigen processing (TAP)-independent manner. May play a role in taste signal transduction via ITPR3. May play a role during fertilization in pronucleus congression and fusion. Plays a role in maintaining nuclear shape, maybe as a component of the LINC complex and through interaction with microtubules. Plays a role in the regulation of cellular excitability by regulating the hyperpolarization-activated cyclic nucleotide-gated HCN4 channel activity. The sequence is that of Inositol 1,4,5-triphosphate receptor associated 2 from Homo sapiens (Human).